The following is a 398-amino-acid chain: Enolase (398 aa).

Residue Gln-154 coordinates (2R)-2-phosphoglycerate. Glu-196 (proton donor) is an active-site residue. 3 residues coordinate Mg(2+): Asp-232, Glu-273, and Asp-300. (2R)-2-phosphoglycerate is bound by residues Lys-325, Arg-354, Ser-355, and Lys-376. The Proton acceptor role is filled by Lys-325.

The protein belongs to the enolase family. Requires Mg(2+) as cofactor.

It is found in the cytoplasm. The protein resides in the secreted. Its subcellular location is the cell surface. The catalysed reaction is (2R)-2-phosphoglycerate = phosphoenolpyruvate + H2O. Its pathway is carbohydrate degradation; glycolysis; pyruvate from D-glyceraldehyde 3-phosphate: step 4/5. In terms of biological role, catalyzes the reversible conversion of 2-phosphoglycerate (2-PG) into phosphoenolpyruvate (PEP). It is essential for the degradation of carbohydrates via glycolysis. The protein is Enolase of Halobacterium salinarum (strain ATCC 700922 / JCM 11081 / NRC-1) (Halobacterium halobium).